Consider the following 184-residue polypeptide: Large ribosomal subunit protein eL13 (184 aa).

The disordered stretch occupies residues Pro28 to Pro53. The segment covering Lys31–Ala42 has biased composition (basic residues).

The protein belongs to the eukaryotic ribosomal protein eL13 family.

In Schistosoma mansoni (Blood fluke), this protein is Large ribosomal subunit protein eL13 (RPL13).